Consider the following 168-residue polypeptide: Crossover junction endodeoxyribonuclease RuvC (168 aa).

Residues Asp9, Glu69, and Asp141 contribute to the active site. Asp9, Glu69, and Asp141 together coordinate Mg(2+).

This sequence belongs to the RuvC family. In terms of assembly, homodimer which binds Holliday junction (HJ) DNA. The HJ becomes 2-fold symmetrical on binding to RuvC with unstacked arms; it has a different conformation from HJ DNA in complex with RuvA. In the full resolvosome a probable DNA-RuvA(4)-RuvB(12)-RuvC(2) complex forms which resolves the HJ. Requires Mg(2+) as cofactor.

It localises to the cytoplasm. It catalyses the reaction Endonucleolytic cleavage at a junction such as a reciprocal single-stranded crossover between two homologous DNA duplexes (Holliday junction).. Its function is as follows. The RuvA-RuvB-RuvC complex processes Holliday junction (HJ) DNA during genetic recombination and DNA repair. Endonuclease that resolves HJ intermediates. Cleaves cruciform DNA by making single-stranded nicks across the HJ at symmetrical positions within the homologous arms, yielding a 5'-phosphate and a 3'-hydroxyl group; requires a central core of homology in the junction. The consensus cleavage sequence is 5'-(A/T)TT(C/G)-3'. Cleavage occurs on the 3'-side of the TT dinucleotide at the point of strand exchange. HJ branch migration catalyzed by RuvA-RuvB allows RuvC to scan DNA until it finds its consensus sequence, where it cleaves and resolves the cruciform DNA. This Bdellovibrio bacteriovorus (strain ATCC 15356 / DSM 50701 / NCIMB 9529 / HD100) protein is Crossover junction endodeoxyribonuclease RuvC.